Consider the following 109-residue polypeptide: MQQFEWWHAAFLFLAVVLDILANILLKLSNGFRRPWMGILSLIAVLGAFSALAQAVKGIELSIAYALWGAFGIIATVAAGWIMFNQRLNYKGWGGIALLLLGMVMIKMA.

The next 4 membrane-spanning stretches (helical) occupy residues 6–26 (WWHA…NILL), 36–56 (WMGI…AQAV), 63–83 (IAYA…GWIM), and 88–108 (LNYK…MIKM).

It belongs to the drug/metabolite transporter (DMT) superfamily. Small multidrug resistance (SMR) (TC 2.A.7.1) family. MdtI subfamily. As to quaternary structure, forms a complex with MdtJ.

It localises to the cell inner membrane. Its function is as follows. Catalyzes the excretion of spermidine. The protein is Spermidine export protein MdtI of Photorhabdus laumondii subsp. laumondii (strain DSM 15139 / CIP 105565 / TT01) (Photorhabdus luminescens subsp. laumondii).